The sequence spans 662 residues: Glycogen debranching enzyme (662 aa).

The active-site Nucleophile is the aspartate 338. Glutamate 373 acts as the Proton donor in catalysis.

This sequence belongs to the glycosyl hydrolase 13 family.

It catalyses the reaction Hydrolysis of (1-&gt;6)-alpha-D-glucosidic linkages to branches with degrees of polymerization of three or four glucose residues in limit dextrin.. It functions in the pathway glycan degradation; glycogen degradation. Removes maltotriose and maltotetraose chains that are attached by 1,6-alpha-linkage to the limit dextrin main chain, generating a debranched limit dextrin. In Yersinia pseudotuberculosis serotype I (strain IP32953), this protein is Glycogen debranching enzyme.